We begin with the raw amino-acid sequence, 302 residues long: uncharacterized protein (302 aa).

Glu48 is an active-site residue.

It belongs to the PhzF family.

This is an uncharacterized protein from Clostridium acetobutylicum (strain ATCC 824 / DSM 792 / JCM 1419 / IAM 19013 / LMG 5710 / NBRC 13948 / NRRL B-527 / VKM B-1787 / 2291 / W).